The chain runs to 176 residues: NAD(P)H-quinone oxidoreductase subunit 6, chloroplastic (176 aa).

Helical transmembrane passes span 10–30 (ILML…VLLT), 33–53 (IYSA…YFLL), 60–80 (VAQL…AVMF), 95–115 (IGDG…MTTI), and 152–172 (FYLP…GAIT).

This sequence belongs to the complex I subunit 6 family. NDH is composed of at least 16 different subunits, 5 of which are encoded in the nucleus.

It localises to the plastid. The protein resides in the chloroplast thylakoid membrane. The enzyme catalyses a plastoquinone + NADH + (n+1) H(+)(in) = a plastoquinol + NAD(+) + n H(+)(out). The catalysed reaction is a plastoquinone + NADPH + (n+1) H(+)(in) = a plastoquinol + NADP(+) + n H(+)(out). In terms of biological role, NDH shuttles electrons from NAD(P)H:plastoquinone, via FMN and iron-sulfur (Fe-S) centers, to quinones in the photosynthetic chain and possibly in a chloroplast respiratory chain. The immediate electron acceptor for the enzyme in this species is believed to be plastoquinone. Couples the redox reaction to proton translocation, and thus conserves the redox energy in a proton gradient. The protein is NAD(P)H-quinone oxidoreductase subunit 6, chloroplastic (ndhG) of Hordeum vulgare (Barley).